The following is a 1362-amino-acid chain: DNA-directed RNA polymerase subunit beta'' (1362 aa).

4 residues coordinate Zn(2+): cysteine 224, cysteine 295, cysteine 302, and cysteine 305.

It belongs to the RNA polymerase beta' chain family. RpoC2 subfamily. As to quaternary structure, in plastids the minimal PEP RNA polymerase catalytic core is composed of four subunits: alpha, beta, beta', and beta''. When a (nuclear-encoded) sigma factor is associated with the core the holoenzyme is formed, which can initiate transcription. It depends on Zn(2+) as a cofactor.

The protein resides in the plastid. The protein localises to the chloroplast. It carries out the reaction RNA(n) + a ribonucleoside 5'-triphosphate = RNA(n+1) + diphosphate. Functionally, DNA-dependent RNA polymerase catalyzes the transcription of DNA into RNA using the four ribonucleoside triphosphates as substrates. This Helianthus annuus (Common sunflower) protein is DNA-directed RNA polymerase subunit beta''.